The following is a 181-amino-acid chain: ATP-dependent protease subunit HslV (181 aa).

Thr9 is a catalytic residue. Positions 166, 169, and 172 each coordinate Na(+).

It belongs to the peptidase T1B family. HslV subfamily. A double ring-shaped homohexamer of HslV is capped on each side by a ring-shaped HslU homohexamer. The assembly of the HslU/HslV complex is dependent on binding of ATP.

The protein localises to the cytoplasm. The catalysed reaction is ATP-dependent cleavage of peptide bonds with broad specificity.. Its activity is regulated as follows. Allosterically activated by HslU binding. In terms of biological role, protease subunit of a proteasome-like degradation complex believed to be a general protein degrading machinery. This chain is ATP-dependent protease subunit HslV, found in Staphylococcus haemolyticus (strain JCSC1435).